The primary structure comprises 555 residues: Urocanate hydratase (555 aa).

Residues 52–53 (GG), glutamine 130, 176–178 (GMG), glutamate 196, arginine 201, 242–243 (NA), 263–267 (QTSAH), 273–274 (YL), and tyrosine 322 contribute to the NAD(+) site. Cysteine 410 is an active-site residue. Glycine 492 is an NAD(+) binding site.

It belongs to the urocanase family. NAD(+) is required as a cofactor.

It is found in the cytoplasm. It carries out the reaction 4-imidazolone-5-propanoate = trans-urocanate + H2O. It participates in amino-acid degradation; L-histidine degradation into L-glutamate; N-formimidoyl-L-glutamate from L-histidine: step 2/3. Catalyzes the conversion of urocanate to 4-imidazolone-5-propionate. This Shewanella baltica (strain OS185) protein is Urocanate hydratase.